The primary structure comprises 685 residues: Stromal interaction molecule 1 (685 aa).

An N-terminal signal peptide occupies residues 1 to 22 (MDVCARLALWLLWGLLLHQGQS). Topologically, residues 23–213 (LSHSHSEKNT…LLTRHNHLKD (191 aa)) are extracellular. A disordered region spans residues 24–43 (SHSHSEKNTGASSGATSEES). Low complexity predominate over residues 32-41 (TGASSGATSE). 2 EF-hand domains span residues 64 to 97 (SFEA…EDLN) and 102 to 126 (TVKH…AWKS). D76, D78, N80, D82, and E87 together coordinate Ca(2+). N-linked (GlcNAc...) asparagine glycans are attached at residues N131 and N171. In terms of domain architecture, SAM spans 132 to 200 (WTVDEVIQWL…QLKALDTVLF (69 aa)). The helical transmembrane segment at 214–234 (FMLVVSIVIGVGGCWFAYIQN) threads the bilayer. Residues 235–685 (RYSKEHMKKM…LKIFKKPLKK (451 aa)) are Cytoplasmic-facing. Residues 248–442 (LEGLHRAEQS…IEILCGFQIV (195 aa)) are a coiled coil. S257 is subject to Phosphoserine. The interval 344–442 (PEALQKWLQL…IEILCGFQIV (99 aa)) is SOAR/CAD. Residues 475-483 (DDVDDMDEE) are contributes to fast Ca(2+)-dependent inactivation of CRAC channels. Over residues 490-499 (MQSPSLQSSV) the composition is skewed to low complexity. The tract at residues 490 to 541 (MQSPSLQSSVRQRLTEPQLGLGSQRDLTHSDSESSLHMSDRQRVAPKPPQMG) is disordered. T504 carries the post-translational modification Phosphothreonine. Residue S512 is modified to Phosphoserine. Residues 515–532 (DLTHSDSESSLHMSDRQR) are compositionally biased toward basic and acidic residues. At T517 the chain carries Phosphothreonine. A phosphoserine mark is found at S519, S521, S523, S524, S567, S575, S602, S608, S618, S621, and S628. The tract at residues 596-685 (LMELNPSVPP…LKIFKKPLKK (90 aa)) is disordered. Over residues 608–620 (SPLLDSSHSLSPS) the composition is skewed to low complexity. Positions 642-645 (TRIP) match the Microtubule tip localization signal motif. Residues 655–666 (EEDNGSIGEETD) show a composition bias toward acidic residues. S660 bears the Phosphoserine mark. T665 bears the Phosphothreonine mark. Position 668 is a phosphoserine (S668). Over residues 670–685 (GRKKFPLKIFKKPLKK) the composition is skewed to basic residues. The required for generation of inwardly rectifying CRAC currents stretch occupies residues 672 to 685 (KKFPLKIFKKPLKK).

Monomer in the presence of Ca(2+). It oligomerizes in absence of Ca(2+). Forms homooligomers and heterooligomers with STIM2. Interacts with pore-forming subunits of CRAC channels, ORAI1, ORAI2 and ORAI3; this interaction is potentiated upon Ca(2+) store depletion. Interacts (via the transmembrane region and the SOAR/CAD domain) with SPPL3; the interaction promotes the binding of STIM1 to ORAI1. Interacts with ORAI1. Interacts with MAPRE1; probably required for targeting to the growing microtubule plus ends. Interacts with CRACR2A/EFCAB4B; the interaction is direct and takes place in absence of Ca(2+). Forms a complex with CRACR2A/EFCAB4B and ORAI1 at low concentration of Ca(2+), the complex dissociates at elevated Ca(2+) concentrations. Interacts with SARAF, promoting a slow inactivation of STIM1-dependent SOCE activity, possibly by facilitating the deoligomerization of STIM1. Interacts with EFHB; the interaction takes place upon Ca(2+)-store depletion and inhibits the association with SARAF. Interacts with ASPH. Interacts with SLC35G1; intracellular Ca(2+)-dependent. May interact with ATP1A1, ATP2A2, ATP2B1, ATP2B4, KPNB1 and XPO1; through SLC35G1. Interacts with STIMATE, promoting STIM1 conformational switch. Interacts with TMEM178A. Interacts with CASQ1 (via C-terminal end and preferentially with the monomeric form); this interaction increases in response to a depletion of intracellular Ca(2+), decreases both STIM1 aggregation and clustering, interaction of STIM1 with ORAI1 and store-operated Ca(2+) entry (SOCE) activity. Interacts with ADCY8. Interacts with TMEM203. Glycosylation is required for cell surface expression. Post-translationally, phosphorylated predominantly on Ser residues. Expressed in maturation-stage ameloblasts (at protein level). Expressed in all tissues examined and in many cell types, including bone marrow stroma, fibroblast, B-cell precursors, lymphoma and erythroleukemia.

It is found in the cell membrane. The protein localises to the endoplasmic reticulum membrane. The protein resides in the sarcoplasmic reticulum. Its subcellular location is the cytoplasm. It localises to the cytoskeleton. In terms of biological role, acts as a Ca(2+) sensor that gates two major inward rectifying Ca(2+) channels at the plasma membrane: Ca(2+) release-activated Ca(2+) (CRAC) channels and arachidonate-regulated Ca(2+)-selective (ARC) channels. Plays a role in mediating store-operated Ca(2+) entry (SOCE), a Ca(2+) influx following depletion of intracellular Ca(2+) stores. Upon Ca(2+) depletion, translocates from the endoplasmic reticulum to the plasma membrane where it activates CRAC channel pore-forming subunits ORA1, ORA2 and ORAI3 to generate sustained and oscillatory Ca(2+) entry. Involved in enamel formation. This is Stromal interaction molecule 1 (Stim1) from Mus musculus (Mouse).